We begin with the raw amino-acid sequence, 337 residues long: Ketol-acid reductoisomerase (NADP(+)) (337 aa).

Residues 3–183 (IELLYDADAD…GGARAGVIPT (181 aa)) form the KARI N-terminal Rossmann domain. Residues 26 to 29 (YGSQ), Arg-49, Ser-52, Ser-54, and 84 to 87 (DTSQ) each bind NADP(+). His-109 is an active-site residue. Gly-135 serves as a coordination point for NADP(+). Positions 184–329 (TFREETETDL…SKLRDLMSWV (146 aa)) constitute a KARI C-terminal knotted domain. Mg(2+) contacts are provided by Asp-192, Glu-196, Glu-228, and Glu-232. Position 253 (Ser-253) interacts with substrate.

Belongs to the ketol-acid reductoisomerase family. Requires Mg(2+) as cofactor.

It carries out the reaction (2R)-2,3-dihydroxy-3-methylbutanoate + NADP(+) = (2S)-2-acetolactate + NADPH + H(+). It catalyses the reaction (2R,3R)-2,3-dihydroxy-3-methylpentanoate + NADP(+) = (S)-2-ethyl-2-hydroxy-3-oxobutanoate + NADPH + H(+). The protein operates within amino-acid biosynthesis; L-isoleucine biosynthesis; L-isoleucine from 2-oxobutanoate: step 2/4. It functions in the pathway amino-acid biosynthesis; L-valine biosynthesis; L-valine from pyruvate: step 2/4. Functionally, involved in the biosynthesis of branched-chain amino acids (BCAA). Catalyzes an alkyl-migration followed by a ketol-acid reduction of (S)-2-acetolactate (S2AL) to yield (R)-2,3-dihydroxy-isovalerate. In the isomerase reaction, S2AL is rearranged via a Mg-dependent methyl migration to produce 3-hydroxy-3-methyl-2-ketobutyrate (HMKB). In the reductase reaction, this 2-ketoacid undergoes a metal-dependent reduction by NADPH to yield (R)-2,3-dihydroxy-isovalerate. This chain is Ketol-acid reductoisomerase (NADP(+)), found in Corynebacterium diphtheriae (strain ATCC 700971 / NCTC 13129 / Biotype gravis).